The sequence spans 232 residues: Protein Mis18-alpha (232 aa).

Phosphoserine occurs at positions 36, 39, and 40. The Mis18 domain maps to 79-177 (PLVFLCSGCR…SVEAIESYIL (99 aa)). 4 residues coordinate Zn(2+): cysteine 84, cysteine 87, cysteine 140, and cysteine 143. Lysine 161 participates in a covalent cross-link: Glycyl lysine isopeptide (Lys-Gly) (interchain with G-Cter in SUMO2). Position 232 is a phosphoserine (serine 232).

It belongs to the mis18 family. In terms of assembly, homodimer, and heterodimer with OIP5/MIS18B. Identified in a complex containing MIS18A, OIP5/MIS18B, MIS18BP1, RBBP7 and RBBP4.

Its subcellular location is the nucleus. The protein resides in the chromosome. It localises to the centromere. Required for recruitment of CENPA to centromeres and normal chromosome segregation during mitosis. The chain is Protein Mis18-alpha (MIS18A) from Otolemur garnettii (Small-eared galago).